The primary structure comprises 135 residues: MFGTKALRAAQHAVRTPSIKFIGKRTIPAVVDHTPQPHPASPTKTLPASFLSSHATFSVYRDHAQQFGPLRKTITPNAGIGGSPAVALGPVEPPQGVYFDRNDLPERFRRQPLTPDEIEAIETGGGHLLYRGSYL.

It belongs to the alpha-ketoglutarate dehydrogenase component 4 family. In terms of assembly, component of the 2-oxoglutarate dehydrogenase complex (OGDC), also called alpha-ketoglutarate dehydrogenase (KGDH) complex. The copmplex is composed of the catalytic subunits OGDH (2-oxoglutarate dehydrogenase; also called E1 subunit), DLST (dihydrolipoamide succinyltransferase; also called E2 subunit) and DLD (dihydrolipoamide dehydrogenase; also called E3 subunit), and the assembly factor KGD4. Within OGDC, interacts (via N-terminus) with E3 subunit and (via C-terminus) with the complex core formed by E1 and E2 subunits.

It is found in the mitochondrion. Molecular adapter that is necessary to a form a stable 2-oxoglutarate dehydrogenase enzyme complex (OGDC). Required for incorporation of the E3 subunit into the E1-E2 core of mitochondrial OGDC, and acting as a stability factor for the fully assembled complex. This is Alpha-ketoglutarate dehydrogenase subunit 4, mitochondrial (KGD4) from Chaetomium thermophilum (strain DSM 1495 / CBS 144.50 / IMI 039719) (Thermochaetoides thermophila).